The sequence spans 308 residues: UPF0282 protein STK_23220 (308 aa).

The protein belongs to the UPF0282 family.

The sequence is that of UPF0282 protein STK_23220 from Sulfurisphaera tokodaii (strain DSM 16993 / JCM 10545 / NBRC 100140 / 7) (Sulfolobus tokodaii).